The sequence spans 318 residues: Methionyl-tRNA formyltransferase (318 aa).

Residue 112 to 115 (SILP) coordinates (6S)-5,6,7,8-tetrahydrofolate.

It belongs to the Fmt family.

It carries out the reaction L-methionyl-tRNA(fMet) + (6R)-10-formyltetrahydrofolate = N-formyl-L-methionyl-tRNA(fMet) + (6S)-5,6,7,8-tetrahydrofolate + H(+). Attaches a formyl group to the free amino group of methionyl-tRNA(fMet). The formyl group appears to play a dual role in the initiator identity of N-formylmethionyl-tRNA by promoting its recognition by IF2 and preventing the misappropriation of this tRNA by the elongation apparatus. This Shewanella baltica (strain OS195) protein is Methionyl-tRNA formyltransferase.